The chain runs to 133 residues: Large ribosomal subunit protein bL17 (133 aa).

The protein belongs to the bacterial ribosomal protein bL17 family. Part of the 50S ribosomal subunit. Contacts protein L32.

This chain is Large ribosomal subunit protein bL17, found in Idiomarina loihiensis (strain ATCC BAA-735 / DSM 15497 / L2-TR).